The primary structure comprises 342 residues: tRNA-specific 2-thiouridylase MnmA 2 (342 aa).

The active-site Nucleophile is C62. C62 and C160 are disulfide-bonded. G86 serves as a coordination point for ATP. Residues 110 to 112 (KDQ) form an interaction with tRNA region. The active-site Cysteine persulfide intermediate is the C160. The interaction with tRNA stretch occupies residues 268-269 (RY).

Belongs to the MnmA/TRMU family.

It is found in the cytoplasm. The catalysed reaction is S-sulfanyl-L-cysteinyl-[protein] + uridine(34) in tRNA + AH2 + ATP = 2-thiouridine(34) in tRNA + L-cysteinyl-[protein] + A + AMP + diphosphate + H(+). Its function is as follows. Catalyzes the 2-thiolation of uridine at the wobble position (U34) of tRNA, leading to the formation of s(2)U34. This chain is tRNA-specific 2-thiouridylase MnmA 2, found in Syntrophus aciditrophicus (strain SB).